Reading from the N-terminus, the 170-residue chain is Small ribosomal subunit protein bS16 (170 aa).

Positions 109–170 (ALAEAEGGPS…AAESEAPAAE (62 aa)) are disordered. Positions 131–150 (AKKDEQPTEKAAEPAAEKAA) are enriched in basic and acidic residues. The segment covering 151 to 170 (EPAAEAPAEAAAESEAPAAE) has biased composition (low complexity).

It belongs to the bacterial ribosomal protein bS16 family.

The polypeptide is Small ribosomal subunit protein bS16 (Mycolicibacterium gilvum (strain PYR-GCK) (Mycobacterium gilvum (strain PYR-GCK))).